A 494-amino-acid polypeptide reads, in one-letter code: GTPase Der (494 aa).

EngA-type G domains follow at residues 3 to 166 (PVVA…AEQM) and 206 to 379 (IKLA…RSAT). GTP-binding positions include 9–16 (GRPNVGKS), 56–60 (DTGGI), 118–121 (NKVD), 212–219 (GRPNVGKS), 259–263 (DTAGV), and 324–327 (NKWD). The 85-residue stretch at 380 to 464 (TRVGTSVLTR…PIRIQFQNSE (85 aa)) folds into the KH-like domain.

It belongs to the TRAFAC class TrmE-Era-EngA-EngB-Septin-like GTPase superfamily. EngA (Der) GTPase family. In terms of assembly, associates with the 50S ribosomal subunit.

GTPase that plays an essential role in the late steps of ribosome biogenesis. This Vibrio cholerae serotype O1 (strain ATCC 39541 / Classical Ogawa 395 / O395) protein is GTPase Der.